Reading from the N-terminus, the 92-residue chain is Ferredoxin-like protein in nif region (92 aa).

4Fe-4S ferredoxin-type domains are found at residues 2-28 and 29-65; these read ALKI…SLAG and PHFE…LADG. Cys9, Cys12, Cys15, Cys19, Cys38, Cys41, Cys50, and Cys54 together coordinate [4Fe-4S] cluster.

[4Fe-4S] cluster serves as cofactor.

Its function is as follows. Ferredoxins are iron-sulfur proteins that transfer electrons in a wide variety of metabolic reactions. The chain is Ferredoxin-like protein in nif region from Azotobacter vinelandii.